The primary structure comprises 209 residues: Large ribosomal subunit protein uL4 (209 aa).

The segment at 46–71 is disordered; that stretch reads GTSSTKTRSEVRGSSKKPWKQKGTGR. The segment covering 59 to 71 has biased composition (basic residues); that stretch reads SSKKPWKQKGTGR.

Belongs to the universal ribosomal protein uL4 family. As to quaternary structure, part of the 50S ribosomal subunit.

Functionally, one of the primary rRNA binding proteins, this protein initially binds near the 5'-end of the 23S rRNA. It is important during the early stages of 50S assembly. It makes multiple contacts with different domains of the 23S rRNA in the assembled 50S subunit and ribosome. In terms of biological role, forms part of the polypeptide exit tunnel. The sequence is that of Large ribosomal subunit protein uL4 from Borrelia garinii subsp. bavariensis (strain ATCC BAA-2496 / DSM 23469 / PBi) (Borreliella bavariensis).